The sequence spans 581 residues: Protein ORF B (581 aa).

The polypeptide is Protein ORF B (Elephas maximus (Indian elephant)).